The primary structure comprises 183 residues: ATP synthase subunit delta (183 aa).

Belongs to the ATPase delta chain family. In terms of assembly, F-type ATPases have 2 components, F(1) - the catalytic core - and F(0) - the membrane proton channel. F(1) has five subunits: alpha(3), beta(3), gamma(1), delta(1), epsilon(1). F(0) has three main subunits: a(1), b(2) and c(10-14). The alpha and beta chains form an alternating ring which encloses part of the gamma chain. F(1) is attached to F(0) by a central stalk formed by the gamma and epsilon chains, while a peripheral stalk is formed by the delta and b chains.

It localises to the cell inner membrane. Its function is as follows. F(1)F(0) ATP synthase produces ATP from ADP in the presence of a proton or sodium gradient. F-type ATPases consist of two structural domains, F(1) containing the extramembraneous catalytic core and F(0) containing the membrane proton channel, linked together by a central stalk and a peripheral stalk. During catalysis, ATP synthesis in the catalytic domain of F(1) is coupled via a rotary mechanism of the central stalk subunits to proton translocation. This protein is part of the stalk that links CF(0) to CF(1). It either transmits conformational changes from CF(0) to CF(1) or is implicated in proton conduction. In Desulforapulum autotrophicum (strain ATCC 43914 / DSM 3382 / VKM B-1955 / HRM2) (Desulfobacterium autotrophicum), this protein is ATP synthase subunit delta.